A 683-amino-acid chain; its full sequence is Long-chain-fatty-acid--CoA ligase 5 (683 aa).

The chain crosses the membrane as a helical; Signal-anchor for type III membrane protein span at residues 12 to 32; it reads LPTPALICLLTFGTAIFLWLI. The Cytoplasmic portion of the chain corresponds to 33–683; that stretch reads NRPQPVLPLI…IKSLYESIEE (651 aa). Residue lysine 361 is modified to N6-acetyllysine.

It belongs to the ATP-dependent AMP-binding enzyme family.

The protein localises to the mitochondrion. It localises to the endoplasmic reticulum. The protein resides in the mitochondrion outer membrane. It is found in the endoplasmic reticulum membrane. Its subcellular location is the cell membrane. The catalysed reaction is a long-chain fatty acid + ATP + CoA = a long-chain fatty acyl-CoA + AMP + diphosphate. It carries out the reaction (5Z,8Z,11Z,14Z)-eicosatetraenoate + ATP + CoA = (5Z,8Z,11Z,14Z)-eicosatetraenoyl-CoA + AMP + diphosphate. It catalyses the reaction hexadecanoate + ATP + CoA = hexadecanoyl-CoA + AMP + diphosphate. The enzyme catalyses (E)-hexadec-2-enoate + ATP + CoA = (2E)-hexadecenoyl-CoA + AMP + diphosphate. The catalysed reaction is 15-hydroxy-(5Z,8Z,11Z,13E)-eicosatetraenoate + ATP + CoA = 15-hydroxy-(5Z,8Z,11Z,13E)-eicosatetraenoyl-CoA + AMP + diphosphate. It carries out the reaction 12-hydroxy-(5Z,8Z,10E,14Z)-eicosatetraenoate + ATP + CoA = 12-hydroxy-(5Z,8Z,10E,14Z)-eicosatetraenoyl-CoA + AMP + diphosphate. It catalyses the reaction 5-hydroxy-(6E,8Z,11Z,14Z)-eicosatetraenoate + ATP + CoA = 5-hydroxy-(6E,8Z,11Z,14Z)-eicosatetraenoyl-CoA + AMP + diphosphate. The enzyme catalyses 14,15-epoxy-(5Z,8Z,11Z)-eicosatrienoate + ATP + CoA = 14,15-epoxy-(5Z,8Z,11Z)-eicosatrienoyl-CoA + AMP + diphosphate. The catalysed reaction is 11,12-epoxy-(5Z,8Z,14Z)-eicosatrienoate + ATP + CoA = 11,12-epoxy-(5Z,8Z,14Z)-eicosatrienoyl-CoA + AMP + diphosphate. It carries out the reaction (9Z)-octadecenoate + ATP + CoA = (9Z)-octadecenoyl-CoA + AMP + diphosphate. Catalyzes the conversion of long-chain fatty acids to their active form acyl-CoAs for both synthesis of cellular lipids, and degradation via beta-oxidation. ACSL5 may activate fatty acids from exogenous sources for the synthesis of triacylglycerol destined for intracellular storage. It was suggested that it may also stimulate fatty acid oxidation. At the villus tip of the crypt-villus axis of the small intestine may sensitize epithelial cells to apoptosis specifically triggered by the death ligand TRAIL. May have a role in the survival of glioma cells. Utilizes a wide range of saturated fatty acids with a preference for C16-C18 unsaturated fatty acids. The polypeptide is Long-chain-fatty-acid--CoA ligase 5 (Mus musculus (Mouse)).